A 194-amino-acid polypeptide reads, in one-letter code: dITP/XTP pyrophosphatase (194 aa).

8–13 contacts substrate; sequence TSNPGK. The Mg(2+) site is built by Glu-38 and Asp-67. Asp-67 acts as the Proton acceptor in catalysis. Residues Ser-68, 152-155, Lys-175, and 180-181 contribute to the substrate site; these read FGYD and HR.

Belongs to the HAM1 NTPase family. In terms of assembly, homodimer. Mg(2+) serves as cofactor.

It catalyses the reaction XTP + H2O = XMP + diphosphate + H(+). The catalysed reaction is dITP + H2O = dIMP + diphosphate + H(+). The enzyme catalyses ITP + H2O = IMP + diphosphate + H(+). In terms of biological role, pyrophosphatase that catalyzes the hydrolysis of nucleoside triphosphates to their monophosphate derivatives, with a high preference for the non-canonical purine nucleotides XTP (xanthosine triphosphate), dITP (deoxyinosine triphosphate) and ITP. Seems to function as a house-cleaning enzyme that removes non-canonical purine nucleotides from the nucleotide pool, thus preventing their incorporation into DNA/RNA and avoiding chromosomal lesions. This is dITP/XTP pyrophosphatase from Legionella pneumophila (strain Lens).